The primary structure comprises 435 residues: Palmitoyltransferase pfa4 (435 aa).

At 1 to 10 the chain is on the cytoplasmic side; that stretch reads MLCSSFSVSR. The helical transmembrane segment at 11–31 threads the bilayer; that stretch reads LAIPAVCILIAFLAYTSQIFF. Residues 32 to 48 are Lumenal-facing; that stretch reads LYFEDAPLKEDEVWRIN. Residues 49 to 69 form a helical membrane-spanning segment; the sequence is ILAICIWICYYRACTVDPGHV. The Cytoplasmic portion of the chain corresponds to 70–129; that stretch reads PKGWMPSDRERLKADRASGRQRWCRRCEAYKPPRAHHCKTCERCVPKMDHHCPWTSNCVS. Residues 91-141 form the DHHC domain; it reads RWCRRCEAYKPPRAHHCKTCERCVPKMDHHCPWTSNCVSHFTFPHFARFLF. The active-site S-palmitoyl cysteine intermediate is the cysteine 121. The helical transmembrane segment at 130 to 150 threads the bilayer; sequence HFTFPHFARFLFYAVVGIAYL. At 151–179 the chain is on the lumenal side; that stretch reads ETRLWQRVSKVWGSRHLPSYLGPSMGQIG. A helical transmembrane segment spans residues 180–200; the sequence is HLFVLFVTNSLTLFALSLLLL. Residues 201–435 are Cytoplasmic-facing; it reads RTLWSLGSNT…QRAKRQHLSQ (235 aa). Positions 359–368 are enriched in basic and acidic residues; sequence RKPFHVRLEE. The disordered stretch occupies residues 359–408; the sequence is RKPFHVRLEEYSNGSSDAEADTGSDDDSDHGEEGWKNSEGERLRDFGVDE. Positions 376–388 are enriched in acidic residues; the sequence is AEADTGSDDDSDH. The span at 389-405 shows a compositional bias: basic and acidic residues; the sequence is GEEGWKNSEGERLRDFG.

This sequence belongs to the DHHC palmitoyltransferase family. PFA4 subfamily.

It is found in the endoplasmic reticulum membrane. It carries out the reaction L-cysteinyl-[protein] + hexadecanoyl-CoA = S-hexadecanoyl-L-cysteinyl-[protein] + CoA. Mediates the reversible addition of palmitate to target proteins, thereby regulating their membrane association and biological function. The sequence is that of Palmitoyltransferase pfa4 from Emericella nidulans (strain FGSC A4 / ATCC 38163 / CBS 112.46 / NRRL 194 / M139) (Aspergillus nidulans).